The primary structure comprises 62 residues: uncharacterized protein (62 aa).

Its subcellular location is the plastid. The protein resides in the chloroplast. This is an uncharacterized protein from Chlamydomonas reinhardtii (Chlamydomonas smithii).